A 182-amino-acid chain; its full sequence is Transmembrane and coiled-coil domain-containing protein 2 (182 aa).

The helical transmembrane segment at 51 to 71 (VQIILRISFLILLGIGIYALW) threads the bilayer. Positions 124–151 (GLQEKILKKLKTVENKMKNLEGIIVAQK) form a coiled coil.

The protein resides in the membrane. In Homo sapiens (Human), this protein is Transmembrane and coiled-coil domain-containing protein 2 (TMCO2).